We begin with the raw amino-acid sequence, 402 residues long: Protochlorophyllide reductase B, chloroplastic (402 aa).

It belongs to the short-chain dehydrogenases/reductases (SDR) family. POR subfamily.

It is found in the plastid. It localises to the chloroplast. The catalysed reaction is chlorophyllide a + NADP(+) = protochlorophyllide a + NADPH + H(+). Its pathway is porphyrin-containing compound metabolism; chlorophyll biosynthesis. Functionally, phototransformation of protochlorophyllide (Pchlide) to chlorophyllide (Chlide). The protein is Protochlorophyllide reductase B, chloroplastic (PORB) of Oryza sativa subsp. japonica (Rice).